Here is a 196-residue protein sequence, read N- to C-terminus: Phosphatidyl-N-methylethanolamine N-methyltransferase (196 aa).

A topological domain (lumenal) is located at residue methionine 1. The segment at residues 2–28 (AIFEINNSFLICAVSIALNPLLWNIAA) is an intramembrane region (helical). Residues 29 to 40 (RSEYNHKTLTKL) are Lumenal-facing. Residues 41-62 (ANGDSKKACYMLAACIFVAGIV) traverse the membrane as a helical segment. At 63–89 (RDLIYQNALKQQPTLGIFMNPLVQGIA) the chain is on the cytoplasmic side. The helical transmembrane segment at 90–110 (KLIFCFGSVLVLSSMYKLGLV) threads the bilayer. Position 94–96 (94–96 (CFG)) interacts with S-adenosyl-L-methionine. Residues 111 to 153 (GTYLGDYFGFLLPERVSGFPFNVNDNPMYNGSTLCFLSTALRY) are Lumenal-facing. Residues 154 to 174 (GKVAGLLLTLEVFFVYRIALK) form a helical membrane-spanning segment. Topologically, residues 175-196 (FEEPFTAKIYAARDSKQAKKSE) are cytoplasmic. 176–177 (EE) contributes to the S-adenosyl-L-methionine binding site.

Belongs to the class VI-like SAM-binding methyltransferase superfamily. PEMT/PEM2 methyltransferase family.

The protein resides in the endoplasmic reticulum membrane. Its subcellular location is the mitochondrion membrane. It catalyses the reaction a 1,2-diacyl-sn-glycero-3-phospho-N-methylethanolamine + S-adenosyl-L-methionine = a 1,2-diacyl-sn-glycero-3-phospho-N,N-dimethylethanolamine + S-adenosyl-L-homocysteine + H(+). The catalysed reaction is a 1,2-diacyl-sn-glycero-3-phospho-N,N-dimethylethanolamine + S-adenosyl-L-methionine = a 1,2-diacyl-sn-glycero-3-phosphocholine + S-adenosyl-L-homocysteine + H(+). Its pathway is phospholipid metabolism; phosphatidylcholine biosynthesis. Catalyzes the second two steps of the methylation pathway of phosphatidylcholine biosynthesis, the SAM-dependent methylation of phosphatidylmonomethylethanolamine (PMME) to phosphatidyldimethylethanolamine (PDME) and of PDME to phosphatidylcholine (PC). The chain is Phosphatidyl-N-methylethanolamine N-methyltransferase from Schizosaccharomyces pombe (strain 972 / ATCC 24843) (Fission yeast).